Here is a 107-residue protein sequence, read N- to C-terminus: MANFKKVKKGRNLRRKCELCETNIEYVDYKNVEFITKFISGIGQIKPHVSTGTCARHQRKVANAIKRARFMALIPYTKDKIRVLAPAASANTAQAPAEKAKKEAVAA.

It belongs to the bacterial ribosomal protein bS18 family. In terms of assembly, part of the 30S ribosomal subunit. Forms a tight heterodimer with protein bS6.

Binds as a heterodimer with protein bS6 to the central domain of the 16S rRNA, where it helps stabilize the platform of the 30S subunit. This is Small ribosomal subunit protein bS18 from Mycoplasmopsis agalactiae (strain NCTC 10123 / CIP 59.7 / PG2) (Mycoplasma agalactiae).